Consider the following 110-residue polypeptide: MSKNDLVKTLRMNYLFDFYQALLTKKQRNYLELFYLQDYSLSEIADTFDVSRQAVYDNIRRTGDLVEDYETKLELYSKFEQRREIYNQMKASIEDPDALKRYIEELEELE.

Belongs to the UPF0122 family.

Its function is as follows. Might take part in the signal recognition particle (SRP) pathway. This is inferred from the conservation of its genetic proximity to ftsY/ffh. May be a regulatory protein. In Staphylococcus carnosus (strain TM300), this protein is UPF0122 protein Sca_0859.